A 479-amino-acid polypeptide reads, in one-letter code: Glutamate--tRNA ligase (479 aa).

The 'HIGH' region motif lies at 11-21 (PSPTGYLHIGG). Zn(2+) is bound by residues Cys-108, Cys-110, Cys-135, and Glu-137. The 'KMSKS' region motif lies at 250–254 (KLSKR). Lys-253 contacts ATP.

It belongs to the class-I aminoacyl-tRNA synthetase family. Glutamate--tRNA ligase type 1 subfamily. In terms of assembly, monomer. Requires Zn(2+) as cofactor.

The protein resides in the cytoplasm. The enzyme catalyses tRNA(Glu) + L-glutamate + ATP = L-glutamyl-tRNA(Glu) + AMP + diphosphate. Functionally, catalyzes the attachment of glutamate to tRNA(Glu) in a two-step reaction: glutamate is first activated by ATP to form Glu-AMP and then transferred to the acceptor end of tRNA(Glu). This chain is Glutamate--tRNA ligase, found in Myxococcus xanthus (strain DK1622).